Consider the following 182-residue polypeptide: Lipid A acyltransferase PagP (182 aa).

The first 21 residues, 1–21 (MTQYFRSLAFFLLPVPATAMA), serve as a signal peptide directing secretion. A lipid anchor (N-palmitoyl cysteine) is attached at cysteine 22. Cysteine 22 is lipidated: S-diacylglycerol cysteine. Catalysis depends on residues histidine 55, aspartate 98, and serine 99.

The protein belongs to the lipid A palmitoyltransferase family. In terms of assembly, homodimer.

The protein resides in the cell outer membrane. It carries out the reaction a lipid A + a 1,2-diacyl-sn-glycero-3-phosphocholine = a hepta-acyl lipid A + a 2-acyl-sn-glycero-3-phosphocholine. The enzyme catalyses a lipid IVA + a 1,2-diacyl-sn-glycero-3-phosphocholine = a lipid IVB + a 2-acyl-sn-glycero-3-phosphocholine. The catalysed reaction is a lipid IIA + a 1,2-diacyl-sn-glycero-3-phosphocholine = a lipid IIB + a 2-acyl-sn-glycero-3-phosphocholine. Transfers a fatty acid residue from the sn-1 position of a phospholipid to the N-linked hydroxyfatty acid chain on the proximal unit of lipid A or its precursors. The sequence is that of Lipid A acyltransferase PagP from Bordetella pertussis (strain CS).